Consider the following 250-residue polypeptide: Ubiquitin-conjugating enzyme E2 6 (250 aa).

Topologically, residues 1 to 232 are cytoplasmic; that stretch reads MATKQAHKRL…DGKEPNDSSS (232 aa). Residues 5–167 form the UBC core domain; that stretch reads QAHKRLTKEY…VQENVETLEK (163 aa). Catalysis depends on cysteine 87, which acts as the Glycyl thioester intermediate. Phosphoserine is present on serine 139. Position 178 is a phosphothreonine (threonine 178). Positions 209–229 are disordered; the sequence is AEQALRQSENNSKKDGKEPND. Basic and acidic residues predominate over residues 219-228; that stretch reads NSKKDGKEPN. Residues 233 to 249 traverse the membrane as a helical segment; sequence MVYIGIAIFLFLVGLFM.

The protein belongs to the ubiquitin-conjugating enzyme family.

Its subcellular location is the endoplasmic reticulum membrane. The catalysed reaction is S-ubiquitinyl-[E1 ubiquitin-activating enzyme]-L-cysteine + [E2 ubiquitin-conjugating enzyme]-L-cysteine = [E1 ubiquitin-activating enzyme]-L-cysteine + S-ubiquitinyl-[E2 ubiquitin-conjugating enzyme]-L-cysteine.. Its pathway is protein modification; protein ubiquitination. Catalyzes the covalent attachment of ubiquitin to other proteins. Functions in degradation of misfolded or regulated proteins localized in the endoplasmic reticulum (ER) lumen or membrane via the ubiquitin-proteasome system. Cognate E2 conjugating enzyme for the DOA10 ubiquitin ligase complex, which is part of the ERAD-C pathway responsible for the rapid degradation of membrane proteins with misfolded cytoplasmic domains. The sequence is that of Ubiquitin-conjugating enzyme E2 6 (UBC6) from Saccharomyces cerevisiae (strain ATCC 204508 / S288c) (Baker's yeast).